The following is a 270-amino-acid chain: Inositol monophosphatase (270 aa).

Glu-71, Asp-91, Leu-93, and Asp-94 together coordinate Mg(2+). Glu-71 is a substrate binding site. Residues 93-96 (LDGT), 194-196 (GSC), Glu-213, and Asp-221 contribute to the substrate site. Asp-221 serves as a coordination point for Mg(2+).

The protein belongs to the inositol monophosphatase superfamily. Mg(2+) is required as a cofactor.

It catalyses the reaction a myo-inositol phosphate + H2O = myo-inositol + phosphate. The protein operates within polyol metabolism; myo-inositol biosynthesis; myo-inositol from D-glucose 6-phosphate: step 2/2. Inhibited by Li(+). Functionally, responsible for the provision of inositol required for synthesis of phosphatidylinositol and polyphosphoinositides. The chain is Inositol monophosphatase (IMP1) from Mesembryanthemum crystallinum (Common ice plant).